A 281-amino-acid chain; its full sequence is sn-glycerol-3-phosphate transport system permease protein UgpE (281 aa).

The next 6 helical transmembrane spans lie at 14-34 (VMLI…FVAA), 85-105 (LAIT…IVYF), 113-133 (FFWM…FPTV), 142-162 (MDSY…TFLF), 188-210 (FFDM…TFIY), and 247-267 (WNQV…VVLL). The 192-residue stretch at 77–268 (LLNSFVMALA…LPPLLVVLLM (192 aa)) folds into the ABC transmembrane type-1 domain.

The protein belongs to the binding-protein-dependent transport system permease family. UgpAE subfamily. The complex is composed of two ATP-binding proteins (UgpC), two transmembrane proteins (UgpA and UgpE) and a solute-binding protein (UgpB).

The protein localises to the cell inner membrane. Its function is as follows. Part of the ABC transporter complex UgpBAEC involved in sn-glycerol-3-phosphate (G3P) import. Probably responsible for the translocation of the substrate across the membrane. This chain is sn-glycerol-3-phosphate transport system permease protein UgpE (ugpE), found in Pectobacterium atrosepticum (strain SCRI 1043 / ATCC BAA-672) (Erwinia carotovora subsp. atroseptica).